A 772-amino-acid chain; its full sequence is Ribosomal protein S6 kinase alpha-4 (772 aa).

One can recognise a Protein kinase 1 domain in the interval 33–301; it reads FELLKVLGTG…AQEVRNHPFF (269 aa). ATP is bound by residues 39-47 and Lys-65; that span reads LGTGAYGKV. Catalysis depends on Asp-161, which acts as the Proton acceptor. A Phosphoserine; by autocatalysis modification is found at Ser-196. In terms of domain architecture, AGC-kinase C-terminal spans 302 to 371; it reads QGLDWVALAA…VAPSILFDHN (70 aa). Ser-343 carries the post-translational modification Phosphoserine; by MAPK1, MAPK3 and MAPK14. Ser-347 is modified (phosphoserine). A phosphoserine; by autocatalysis mark is found at Ser-360 and Ser-365. Residues 411-674 form the Protein kinase 2 domain; it reads DLREPALGQG…LEGLRGSSWL (264 aa). ATP contacts are provided by residues 417-425 and Lys-440; that span reads LGQGSFSVC. Asp-530 serves as the catalytic Proton acceptor. Thr-542 carries the phosphothreonine modification. The residue at position 568 (Thr-568) is a Phosphothreonine; by MAPK1, MAPK3 and MAPK14. A phosphoserine mark is found at Ser-634 and Ser-678. Disordered stretches follow at residues 673-696 and 728-772; these read WLQD…SSGP and AKRR…LPPS. Thr-687 bears the Phosphothreonine mark. The tract at residues 725–772 is required for nuclear targeting and association with MAPK14; it reads APLAKRRKQKLRSATASRRGSPAPANPGRAPVASKGAPRRANGPLPPS. A Phosphoserine; by autocatalysis modification is found at Ser-737. Ser-745 is subject to Phosphoserine.

This sequence belongs to the protein kinase superfamily. AGC Ser/Thr protein kinase family. S6 kinase subfamily. In terms of assembly, forms a complex with either MAPK1/ERK2 or MAPK3/ERK1 in quiescent cells which transiently dissociates following mitogenic stimulation. Also associates with MAPK14/p38-alpha. Activated RPS6KA4 associates with and phosphorylates the NF-kappa-B p65 subunit RELA. Mg(2+) serves as cofactor. Post-translationally, ser-343 and Thr-568 phosphorylation is required for kinase activity. Ser-343 and Ser-196 are autophosphorylated by the C-terminal kinase domain, and their phosphorylation is essential for the catalytic activity of the N-terminal kinase domain. Phosphorylated at Ser-343, Thr-568 and Thr-687 by MAPK1/ERK2, MAPK3/ERK1 and MAPK14/p38-alpha. Autophosphorylated at Ser-737 and Ser-745 by the N-terminal kinase domain.

It localises to the nucleus. It carries out the reaction L-seryl-[protein] + ATP = O-phospho-L-seryl-[protein] + ADP + H(+). The enzyme catalyses L-threonyl-[protein] + ATP = O-phospho-L-threonyl-[protein] + ADP + H(+). With respect to regulation, activated by phosphorylation at Ser-343, Thr-568 and Thr-687 by MAPK1/ERK2, MAPK3/ERK1 and MAPK14/p38-alpha, and by further autophosphorylation of Ser-196, Ser-360 and Ser-365 by the activated C-terminal kinase domain. Serine/threonine-protein kinase that is required for the mitogen or stress-induced phosphorylation of the transcription factors CREB1 and ATF1 and for the regulation of the transcription factor RELA, and that contributes to gene activation by histone phosphorylation and functions in the regulation of inflammatory genes. Phosphorylates CREB1 and ATF1 in response to mitogenic or stress stimuli such as UV-C irradiation, epidermal growth factor (EGF) and anisomycin. Plays an essential role in the control of RELA transcriptional activity in response to TNF. Phosphorylates 'Ser-10' of histone H3 in response to mitogenics, stress stimuli and EGF, which results in the transcriptional activation of several immediate early genes, including proto-oncogenes c-fos/FOS and c-jun/JUN. May also phosphorylate 'Ser-28' of histone H3. Mediates the mitogen- and stress-induced phosphorylation of high mobility group protein 1 (HMGN1/HMG14). In lipopolysaccharide-stimulated primary macrophages, acts downstream of the Toll-like receptor TLR4 to limit the production of pro-inflammatory cytokines. Functions probably by inducing transcription of the MAP kinase phosphatase DUSP1 and the anti-inflammatory cytokine interleukin 10 (IL10), via CREB1 and ATF1 transcription factors. The protein is Ribosomal protein S6 kinase alpha-4 (RPS6KA4) of Homo sapiens (Human).